The following is a 233-amino-acid chain: Orotidine 5'-phosphate decarboxylase (233 aa).

Substrate contacts are provided by residues Asp-9, Lys-31, Asp-58–Thr-67, Thr-120, Arg-182, Gln-191, Gly-211, and Arg-212. Lys-60 acts as the Proton donor in catalysis.

Belongs to the OMP decarboxylase family. Type 1 subfamily. Homodimer.

The catalysed reaction is orotidine 5'-phosphate + H(+) = UMP + CO2. It participates in pyrimidine metabolism; UMP biosynthesis via de novo pathway; UMP from orotate: step 2/2. In terms of biological role, catalyzes the decarboxylation of orotidine 5'-monophosphate (OMP) to uridine 5'-monophosphate (UMP). This is Orotidine 5'-phosphate decarboxylase from Listeria innocua serovar 6a (strain ATCC BAA-680 / CLIP 11262).